The sequence spans 713 residues: Pro-neuregulin-3, membrane-bound isoform (713 aa).

Over 1–362 (MSEGAAGASP…MESEDVYQRQ (362 aa)) the chain is Extracellular. Disordered stretches follow at residues 28–48 (AAAAAAAGGGPDGGGEGAAEP), 119–220 (SSFP…STQA), and 251–282 (AAASSSSPSSTSSTTTTPETSTSPKFHTTTYS). Gly residues predominate over residues 34–44 (AGGGPDGGGEG). Low complexity predominate over residues 127 to 148 (TTTTTTSTTSPATPSAGGAASS). Over residues 149 to 163 (RTPNRISTRLTTITR) the composition is skewed to polar residues. Composition is skewed to low complexity over residues 195-207 (STTAPFFSSSTPG) and 254-274 (SSSSPSSTSSTTTTPETSTSP). An EGF-like domain is found at 288-331 (HFKPCRDKDLAYCLNDGECFVIETLTGSHKHCRCKEGYQGVRCD). 3 cysteine pairs are disulfide-bonded: Cys292-Cys306, Cys300-Cys319, and Cys321-Cys330. Residues 363-383 (VLSISCIIFGIVIVGMFCAAF) form a helical membrane-spanning segment. Over 384–713 (YFKSKKQAKQ…EIQRDSVLTK (330 aa)) the chain is Cytoplasmic. Positions 449 to 496 (SAPQSFPEVTSPDRGSQPIKHHSPGQRSGMLHRNTFRRAPPSPRSRLG) are disordered.

Belongs to the neuregulin family. Interacts with ERBB4. In terms of processing, proteolytic cleavage close to the plasma membrane on the external face leads to the release of the soluble growth factor form. Post-translationally, extensive glycosylation precedes the proteolytic cleavage. As to expression, expressed in sympathetic, motor, and sensory neurons.

Its subcellular location is the cell membrane. The protein localises to the secreted. Its function is as follows. Direct ligand for the ERBB4 tyrosine kinase receptor. Binding results in ligand-stimulated tyrosine phosphorylation and activation of the receptor. Does not bind to the EGF receptor, ERBB2 or ERBB3 receptors. The sequence is that of Pro-neuregulin-3, membrane-bound isoform (Nrg3) from Mus musculus (Mouse).